Reading from the N-terminus, the 125-residue chain is Holo-[acyl-carrier-protein] synthase (125 aa).

Residues aspartate 8 and glutamate 57 each contribute to the Mg(2+) site.

It belongs to the P-Pant transferase superfamily. AcpS family. Mg(2+) serves as cofactor.

Its subcellular location is the cytoplasm. The catalysed reaction is apo-[ACP] + CoA = holo-[ACP] + adenosine 3',5'-bisphosphate + H(+). In terms of biological role, transfers the 4'-phosphopantetheine moiety from coenzyme A to a Ser of acyl-carrier-protein. The polypeptide is Holo-[acyl-carrier-protein] synthase (Blochmanniella floridana).